The sequence spans 299 residues: Nitrogenase iron protein (299 aa).

11–18 serves as a coordination point for ATP; the sequence is GKGGIGKS. Cys99 contributes to the [4Fe-4S] cluster binding site. Arg102 is modified (ADP-ribosylarginine; by dinitrogenase reductase ADP-ribosyltransferase). Cys133 contacts [4Fe-4S] cluster.

The protein belongs to the NifH/BchL/ChlL family. As to quaternary structure, homodimer. [4Fe-4S] cluster is required as a cofactor. Post-translationally, the reversible ADP-ribosylation of Arg-102 inactivates the nitrogenase reductase and regulates nitrogenase activity.

It catalyses the reaction N2 + 8 reduced [2Fe-2S]-[ferredoxin] + 16 ATP + 16 H2O = H2 + 8 oxidized [2Fe-2S]-[ferredoxin] + 2 NH4(+) + 16 ADP + 16 phosphate + 6 H(+). The key enzymatic reactions in nitrogen fixation are catalyzed by the nitrogenase complex, which has 2 components: the iron protein and the molybdenum-iron protein. The sequence is that of Nitrogenase iron protein from Rhodopseudomonas palustris (strain BisB5).